We begin with the raw amino-acid sequence, 283 residues long: Protoheme IX farnesyltransferase (283 aa).

Helical transmembrane passes span 13–33, 35–55, 90–110, 156–176, 208–228, 230–250, and 262–282; these read ISSV…PTGL, GGTL…VGTL, ILLV…LTAV, LGAG…PHFL, MIGF…TEAA, WIYG…TIVF, and VLKA…VDWF.

Belongs to the UbiA prenyltransferase family. Protoheme IX farnesyltransferase subfamily.

Its subcellular location is the cell inner membrane. The enzyme catalyses heme b + (2E,6E)-farnesyl diphosphate + H2O = Fe(II)-heme o + diphosphate. It functions in the pathway porphyrin-containing compound metabolism; heme O biosynthesis; heme O from protoheme: step 1/1. In terms of biological role, converts heme B (protoheme IX) to heme O by substitution of the vinyl group on carbon 2 of heme B porphyrin ring with a hydroxyethyl farnesyl side group. This Salinibacter ruber (strain DSM 13855 / M31) protein is Protoheme IX farnesyltransferase.